The sequence spans 83 residues: Mitochondrial import inner membrane translocase subunit TIM10 (83 aa).

Position 2 is an N-acetylalanine (A2). The Twin CX3C motif signature appears at 36–61; that stretch reads CFNKCVDKRYKEAELNMGENSCIDRC. 2 disulfide bridges follow: C36–C61 and C40–C57.

This sequence belongs to the small Tim family. As to quaternary structure, heterohexamer; composed of 3 copies of TIM9 and 3 copies of TIM10, named soluble 70 kDa complex. The complex associates with the TIM22 component of the TIM22 complex. Interacts with multi-pass transmembrane proteins in transit. Expressed in roots, flowers, young cotyledons and leaves.

The protein resides in the mitochondrion intermembrane space. Functionally, mitochondrial intermembrane chaperone that participates in the import and insertion of multi-pass transmembrane proteins into the mitochondrial inner membrane. May also be required for the transfer of beta-barrel precursors from the TOM complex to the sorting and assembly machinery (SAM complex) of the outer membrane. Acts as a chaperone-like protein that protects the hydrophobic precursors from aggregation and guide them through the mitochondrial intermembrane space. This is Mitochondrial import inner membrane translocase subunit TIM10 (TIM10) from Arabidopsis thaliana (Mouse-ear cress).